The following is a 388-amino-acid chain: Lipid-A-disaccharide synthase (388 aa).

It belongs to the LpxB family.

The enzyme catalyses a lipid X + a UDP-2-N,3-O-bis[(3R)-3-hydroxyacyl]-alpha-D-glucosamine = a lipid A disaccharide + UDP + H(+). It participates in bacterial outer membrane biogenesis; LPS lipid A biosynthesis. Functionally, condensation of UDP-2,3-diacylglucosamine and 2,3-diacylglucosamine-1-phosphate to form lipid A disaccharide, a precursor of lipid A, a phosphorylated glycolipid that anchors the lipopolysaccharide to the outer membrane of the cell. The protein is Lipid-A-disaccharide synthase of Saccharophagus degradans (strain 2-40 / ATCC 43961 / DSM 17024).